A 416-amino-acid polypeptide reads, in one-letter code: Glutamyl-tRNA reductase (416 aa).

Substrate is bound by residues T49–R52, S105, E110–Q112, and Q116. C50 (nucleophile) is an active-site residue. Position 185–190 (G185–I190) interacts with NADP(+).

It belongs to the glutamyl-tRNA reductase family. Homodimer.

The enzyme catalyses (S)-4-amino-5-oxopentanoate + tRNA(Glu) + NADP(+) = L-glutamyl-tRNA(Glu) + NADPH + H(+). Its pathway is porphyrin-containing compound metabolism; protoporphyrin-IX biosynthesis; 5-aminolevulinate from L-glutamyl-tRNA(Glu): step 1/2. In terms of biological role, catalyzes the NADPH-dependent reduction of glutamyl-tRNA(Glu) to glutamate 1-semialdehyde (GSA). The protein is Glutamyl-tRNA reductase of Shewanella amazonensis (strain ATCC BAA-1098 / SB2B).